A 268-amino-acid polypeptide reads, in one-letter code: Large ribosomal subunit protein bL9m (268 aa).

The N-terminal 52 residues, 1-52 (MAAAAFAVPRGVQLRVLTERLLRGGVRELLRPRLSGSTPGSERDFSLSHSRG), are a transit peptide targeting the mitochondrion.

The protein belongs to the bacterial ribosomal protein bL9 family. In terms of assembly, component of the mitochondrial ribosome large subunit (39S) which comprises a 16S rRNA and about 50 distinct proteins.

It localises to the mitochondrion. This is Large ribosomal subunit protein bL9m (MRPL9) from Bos taurus (Bovine).